The primary structure comprises 571 residues: Septation ring formation regulator EzrA (571 aa).

Topologically, residues 1 to 3 are extracellular; that stretch reads MYY. A helical transmembrane segment spans residues 4 to 22; the sequence is MLIGFIIVVIAVIGAGYIL. Over 23–571 the chain is Cytoplasmic; it reads KRKHYQRINE…ESKVSVDDIE (549 aa). Coiled-coil stretches lie at residues 248 to 298, 326 to 374, 400 to 437, and 478 to 529; these read LAQM…DTLE, DALA…ASGE, KFAEELRSLRKDELEARDDAERMRRAIITLDRKMERER, and RIAE…ENHF.

Belongs to the EzrA family.

The protein localises to the cell membrane. Negative regulator of FtsZ ring formation; modulates the frequency and position of FtsZ ring formation. Inhibits FtsZ ring formation at polar sites. Interacts either with FtsZ or with one of its binding partners to promote depolymerization. This chain is Septation ring formation regulator EzrA, found in Listeria monocytogenes serotype 4b (strain CLIP80459).